We begin with the raw amino-acid sequence, 221 residues long: Putative NAD(P)H nitroreductase YfkO (221 aa).

FMN contacts are provided by residues 15 to 17 and 73 to 75; these read RHA and QKQ. An NAD(+)-binding site is contributed by 157 to 162; the sequence is AAAQIG. FMN-binding positions include 169 to 170 and Arg-211; that span reads EG.

Belongs to the nitroreductase family. In terms of assembly, monomer. The cofactor is FMN.

The protein is Putative NAD(P)H nitroreductase YfkO (yfkO) of Bacillus subtilis (strain 168).